Consider the following 1622-residue polypeptide: DNA (cytosine-5)-methyltransferase 1 (1622 aa).

Residues 1-145 (MPARTAPARV…RRSKSDSETM (145 aa)) form an interaction with DNMT3A region. 2 interaction with the PRC2/EED-EZH2 complex regions span residues 1–342 (MPAR…VERK) and 304–610 (TPEP…TVIN). The residue at position 15 (S15) is a Phosphoserine. In terms of domain architecture, DMAP1-binding spans 16–109 (PAGSLPDHVR…TQKANGCPAN (94 aa)). K70 carries the N6,N6-dimethyllysine; by EHMT2 modification. The interval 100–360 (TQKANGCPAN…IPKLNPPQCP (261 aa)) is disordered. Residues 126–137 (PRSRPKPRGPRR) are compositionally biased toward basic residues. At S138 the chain carries Phosphoserine. K139 carries the N6-methyllysine; by SETD7 modification. S140 bears the Phosphoserine; by PKB/AKT1 mark. The segment at 146 to 213 (IEASSSSVAT…TESRASRAGE (68 aa)) is interaction with DNMT3B. S149 and S151 each carry phosphoserine. The span at 149-166 (SSSSVATRRTTRQTTITS) shows a compositional bias: low complexity. T163 carries the phosphothreonine modification. K169 bears the N6-acetyllysine mark. Positions 173–200 (KRKPKEDSEKGNANESAAEERDQDKKRR) match the Nuclear localization signal motif. 4 stretches are compositionally biased toward basic and acidic residues: residues 176-197 (PKED…DQDK), 207-222 (RASR…ERVR), 237-269 (DDRR…THLD), and 276-300 (KDKR…KEEV). At T304 the chain carries Phosphothreonine. Positions 327–556 (KPEPLSIPVQ…NVNRFTEDSL (230 aa)) are DNA replication foci-targeting sequence. Residues C359 and C362 each contribute to the Zn(2+) site. K372 carries the post-translational modification N6-acetyllysine. At S400 the chain carries Phosphoserine. The Zn(2+) site is built by C420 and H424. Residues S515 and S555 each carry the phosphoserine modification. Residues 650–696 (NTMKRRRCGVCEVCQQPECGKCKACKDMVKFGGTGRSKQACLKRRCP) form a CXXC-type zinc finger. Positions 657, 660, 663, 668, 671, 674, 690, and 695 each coordinate Zn(2+). Residues 697–758 (NLAVKEADED…TYYWKVSIDE (62 aa)) form an autoinhibitory linker region. The interval 702-733 (EADEDEEADDDIPELPSPKKLHQGKKKKQNKD) is disordered. Acidic residues predominate over residues 703-714 (ADEDEEADDDIP). Residue S718 is modified to Phosphoserine. Residues 720–731 (KKLHQGKKKKQN) are compositionally biased toward basic residues. Phosphoserine is present on S736. N6-acetyllysine is present on K753. One can recognise a BAH 1 domain in the interval 759–884 (ETLEVGDCVS…QDYARFESPP (126 aa)). Position 882 is a phosphoserine (S882). K895, K961, and K980 each carry N6-acetyllysine. The BAH 2 domain occupies 977-1105 (TYRKYSDYIK…SKTKSFEDPP (129 aa)). The disordered stretch occupies residues 1099–1138 (KSFEDPPNHARSPGNKGKGKGKGKGKGKPQVSEPKEPEAA). Tandem repeats lie at residues 1114 to 1115 (KG), 1116 to 1117 (KG), 1118 to 1119 (KG), 1120 to 1121 (KG), 1122 to 1123 (KG), and 1124 to 1125 (KG). Positions 1114 to 1127 (KGKGKGKGKGKGKP) are 7 X 2 AA tandem repeats of K-G. Residues 1115 to 1125 (GKGKGKGKGKG) are compositionally biased toward basic residues. An N6-acetyllysine mark is found at K1116, K1118, K1120, K1122, K1124, and K1126. Residues 1126-1127 (KP) form a 7; approximate repeat. Residues 1126–1622 (KPQVSEPKEP…KGKEETTTED (497 aa)) are interaction with the PRC2/EED-EZH2 complex. The region spanning 1144–1603 (LRTLDVFSGC…LEIKLCLLAS (460 aa)) is the SAM-dependent MTase C5-type domain. The segment at 1144 to 1622 (LRTLDVFSGC…KGKEETTTED (479 aa)) is catalytic. S-adenosyl-L-methionine-binding positions include S1151, 1155–1156 (GL), 1173–1174 (EM), 1195–1196 (DC), and C1196. C1231 is a catalytic residue. At K1354 the chain carries N6-acetyllysine. Phosphoserine is present on S1436. The S-adenosyl-L-methionine site is built by N1582 and V1584. K1613 participates in a covalent cross-link: Glycyl lysine isopeptide (Lys-Gly) (interchain with G-Cter in SUMO2).

It belongs to the class I-like SAM-binding methyltransferase superfamily. C5-methyltransferase family. Homodimer. Forms a stable complex with E2F1, BB1 and HDAC1. Forms a complex with DMAP1 and HDAC2, with direct interaction. Interacts with the PRC2/EED-EZH2 complex. Probably part of a corepressor complex containing ZNF304, TRIM28, SETDB1 and DNMT1. Interacts with UHRF1; promoting its recruitment to hemimethylated DNA. Interacts with USP7, promoting its deubiquitination. Interacts with PCNA. Interacts with MBD2 and MBD3. Interacts with DNMT3A and DNMT3B. Interacts with UBC9. Interacts with CSNK1D. Interacts with HDAC1. Interacts with BAZ2A/TIP5. Interacts with SIRT7. Interacts with ZNF263; recruited to the SIX3 promoter along with other proteins involved in chromatin modification and transcriptional corepression where it contributes to transcriptional repression. Interacts with L3MBTL3 and DCAF5; the interaction requires DNMT1 methylation at Lys-139 and is necessary to target DNMT1 for ubiquitination by the CRL4-DCAF5 E3 ubiquitin ligase complex and proteasomal degradation. Interacts with PHF20L1; the interaction requires DNMT1 methylation at Lys-139 and protects DNMT1 from ubiquitination and proteasomal degradation. In terms of processing, sumoylated; sumoylation increases activity. Acetylation on multiple lysines, mainly by KAT2B/PCAF, regulates cell cycle G(2)/M transition. Deacetylation of Lys-1116 and Lys-1354 by SIRT1 increases methyltransferase activity. Post-translationally, phosphorylation of Ser-151 by CDKs is important for enzymatic activity and protein stability. Phosphorylation of Ser-140 by AKT1 prevents methylation by SETD7 thereby increasing DNMT1 stability. In terms of processing, methylation at Lys-139 by SETD7 is necessary for the regulation of DNMT1 proteasomal degradation. Ubiquitinated by UHRF1; interaction with USP7 counteracts ubiquitination by UHRF1 by promoting deubiquitination and preventing degradation by the proteasome. In terms of tissue distribution, isoforms 0 and 8 are highly expressed in placenta, brain, lung, spleen, kidney, heart, and at much lower levels in liver. Isoform 1 is expressed in cerebellum, isoform 2 in muscle and testis, isoform 3 in lung, isoform 4 in spleen and brain, and isoform 5 in brain.

The protein resides in the nucleus. It carries out the reaction a 2'-deoxycytidine in DNA + S-adenosyl-L-methionine = a 5-methyl-2'-deoxycytidine in DNA + S-adenosyl-L-homocysteine + H(+). Its function is as follows. Methylates CpG residues. Preferentially methylates hemimethylated DNA. Associates with DNA replication sites in S phase maintaining the methylation pattern in the newly synthesized strand, that is essential for epigenetic inheritance. Associates with chromatin during G2 and M phases to maintain DNA methylation independently of replication. It is responsible for maintaining methylation patterns established in development. DNA methylation is coordinated with methylation of histones. Mediates transcriptional repression by direct binding to HDAC2. In association with DNMT3B and via the recruitment of CTCFL/BORIS, involved in activation of BAG1 gene expression by modulating dimethylation of promoter histone H3 at H3K4 and H3K9. Probably forms a corepressor complex required for activated KRAS-mediated promoter hypermethylation and transcriptional silencing of tumor suppressor genes (TSGs) or other tumor-related genes in colorectal cancer (CRC) cells. Also required to maintain a transcriptionally repressive state of genes in undifferentiated embryonic stem cells (ESCs). Associates at promoter regions of tumor suppressor genes (TSGs) leading to their gene silencing. Promotes tumor growth. This Rattus norvegicus (Rat) protein is DNA (cytosine-5)-methyltransferase 1 (Dnmt1).